The primary structure comprises 938 residues: Isoleucine--tRNA ligase (938 aa).

Residues 58-68 (PYANGSIHIGH) carry the 'HIGH' region motif. An N6-acetyllysine modification is found at Lys-183. Glu-561 contacts L-isoleucyl-5'-AMP. Residues 602 to 606 (KMSKS) carry the 'KMSKS' region motif. Lys-605 contributes to the ATP binding site. Residues Cys-901, Cys-904, Cys-921, and Cys-924 each contribute to the Zn(2+) site.

It belongs to the class-I aminoacyl-tRNA synthetase family. IleS type 1 subfamily. In terms of assembly, monomer. It depends on Zn(2+) as a cofactor.

It is found in the cytoplasm. It carries out the reaction tRNA(Ile) + L-isoleucine + ATP = L-isoleucyl-tRNA(Ile) + AMP + diphosphate. Catalyzes the attachment of isoleucine to tRNA(Ile). As IleRS can inadvertently accommodate and process structurally similar amino acids such as valine, to avoid such errors it has two additional distinct tRNA(Ile)-dependent editing activities. One activity is designated as 'pretransfer' editing and involves the hydrolysis of activated Val-AMP. The other activity is designated 'posttransfer' editing and involves deacylation of mischarged Val-tRNA(Ile). This chain is Isoleucine--tRNA ligase, found in Shigella dysenteriae serotype 1 (strain Sd197).